The chain runs to 631 residues: Chaperone protein DnaK (631 aa).

Residue Thr198 is modified to Phosphothreonine; by autocatalysis. A disordered region spans residues 602–631 (EAAGGAQQAGKDDVVDAEFTEVDDDKKKSA).

It belongs to the heat shock protein 70 family.

Acts as a chaperone. The polypeptide is Chaperone protein DnaK (Rhodopseudomonas palustris (strain ATCC BAA-98 / CGA009)).